The following is a 119-amino-acid chain: Non-specific lipid-transfer protein 11 (119 aa).

Residues 1–28 (MRNITTTTRKMLLLVITILLGIAYHGEA) form the signal peptide. Intrachain disulfides connect Cys31–Cys78, Cys41–Cys55, Cys56–Cys101, and Cys76–Cys115.

It belongs to the plant LTP family.

Functionally, plant non-specific lipid-transfer proteins transfer phospholipids as well as galactolipids across membranes. May play a role in wax or cutin deposition in the cell walls of expanding epidermal cells and certain secretory tissues. The chain is Non-specific lipid-transfer protein 11 (LTP11) from Arabidopsis thaliana (Mouse-ear cress).